A 426-amino-acid chain; its full sequence is Histidine--tRNA ligase (426 aa).

Belongs to the class-II aminoacyl-tRNA synthetase family. As to quaternary structure, homodimer.

Its subcellular location is the cytoplasm. The enzyme catalyses tRNA(His) + L-histidine + ATP = L-histidyl-tRNA(His) + AMP + diphosphate + H(+). This is Histidine--tRNA ligase from Streptococcus pyogenes serotype M6 (strain ATCC BAA-946 / MGAS10394).